The following is a 301-amino-acid chain: Probable protein phosphatase 2C 4 (301 aa).

The segment covering 1–18 has biased composition (polar residues); that stretch reads MGPYLSQPNKNKTTTSGE. Residues 1–20 are disordered; that stretch reads MGPYLSQPNKNKTTTSGEGK. The PPM-type phosphatase domain maps to 23 to 298; that stretch reads IFAASEMQGW…DNMTTLIIYL (276 aa). Positions 57, 58, 237, and 289 each coordinate Mn(2+).

This sequence belongs to the PP2C family. Mg(2+) serves as cofactor. Mn(2+) is required as a cofactor.

It localises to the membrane. The enzyme catalyses O-phospho-L-seryl-[protein] + H2O = L-seryl-[protein] + phosphate. The catalysed reaction is O-phospho-L-threonyl-[protein] + H2O = L-threonyl-[protein] + phosphate. In terms of biological role, enzyme with a broad specificity. The sequence is that of Probable protein phosphatase 2C 4 from Paramecium tetraurelia.